A 359-amino-acid polypeptide reads, in one-letter code: Phosphate acyltransferase (359 aa).

A disordered region spans residues 338–359; it reads LEGAAGRAARPPPPRRASSHDA.

It belongs to the PlsX family. In terms of assembly, homodimer. Probably interacts with PlsY.

Its subcellular location is the cytoplasm. It catalyses the reaction a fatty acyl-[ACP] + phosphate = an acyl phosphate + holo-[ACP]. The protein operates within lipid metabolism; phospholipid metabolism. Functionally, catalyzes the reversible formation of acyl-phosphate (acyl-PO(4)) from acyl-[acyl-carrier-protein] (acyl-ACP). This enzyme utilizes acyl-ACP as fatty acyl donor, but not acyl-CoA. The polypeptide is Phosphate acyltransferase (Anaeromyxobacter sp. (strain Fw109-5)).